The chain runs to 21 residues: Natriuretic peptide TsNP (21 aa).

A disulfide bridge links cysteine 5 with cysteine 21.

As to expression, expressed by the venom gland.

It is found in the secreted. Functionally, scorpion venom natriuretic peptide that increases the perfusion pressure, glomerular filtration rate and urinary flow in the isolated perfused rat kidney assay. Induces a decrease of the percentages of renal transport for sodium, potassium and chloride and an increase of the urinary cGMP concentration. Also down-regulates the mRNA expression of natriuretic peptide receptor 1 (NPR1) in the kidneys whereas it up-regulates those of NPR2, NPR3 and guanylyl cyclase C (GUCY2C) mRNAs. May exhibit hypotensive and vasodepressor activities. This is Natriuretic peptide TsNP from Tityus serrulatus (Brazilian scorpion).